The chain runs to 177 residues: MPIKSRIRSIPDYPKKGIMFRDITTLIKDPVGFRLVIDSLTQRYLENGVDFDMIVGIEARGFIIGGALSYTLGKGFVPVRKPGKLPADVVSQEYELEYGSDKIEIHMDALEKGTRVLLVDDLLATGGTALAAAALVEKVGGVVAEMAFIVNLPDVGGEQKIRDKGYSIYSLTDFEGD.

It belongs to the purine/pyrimidine phosphoribosyltransferase family. As to quaternary structure, homodimer.

It is found in the cytoplasm. The catalysed reaction is AMP + diphosphate = 5-phospho-alpha-D-ribose 1-diphosphate + adenine. Its pathway is purine metabolism; AMP biosynthesis via salvage pathway; AMP from adenine: step 1/1. Functionally, catalyzes a salvage reaction resulting in the formation of AMP, that is energically less costly than de novo synthesis. The polypeptide is Adenine phosphoribosyltransferase (Chlorobium limicola (strain DSM 245 / NBRC 103803 / 6330)).